Reading from the N-terminus, the 623-residue chain is Protein EDS1 (623 aa).

Ala-2 is modified (N-acetylalanine). The active-site Nucleophile is Ser-123. Active-site charge relay system residues include Asp-187 and His-317. Residues 358–383 adopt a coiled-coil conformation; sequence VQAALEEEKKRVENQKKIIQVIEQER.

In terms of assembly, homodimer. Interacts with RPS4, RPS6, SNC1, SRFR1, AvrRps4 and HopA1. Part of a nuclear complex made of EDS1, PAD4 and SAG101, that can be redirected to the cytoplasm in the presence of an extranuclear form of EDS1. Interacts (via N-terminus) with PAD4 (via N-terminus). Interacts (via N-terminus) with SAG101. EDS1-SAG101 and EDS1-PAD4 form separate complexes in pathogen-unchallenged cells. Part of a nuclear protein complex made of VICTR, PAD4 and EDS1. Interacts with VICTR.

It localises to the nucleus. Its subcellular location is the cytoplasm. The protein localises to the microsome. Functionally, positive regulator of basal resistance and of effector-triggered immunity specifically mediated by TIR-NB-LRR (TNL) resistance proteins. Disruption by bacterial effector of EDS1-TIR-NB-LRR resistance protein interactions constitutes the first step in resistance activation. Acts redundantly with salicylic acid to regulate resistance gene-mediated signaling. Triggers early plant defenses and hypersensitive response independently of PAD4, and then recruits PAD4 to potentiate plant defenses through the accumulation of salicylic acid. Nuclear localization is essential for basal and TNL-conditioned immunity and for reprogramming defense gene expression, while cytoplasmic EDS1 is required to induce a complete immune response. Heterodimerization with PAD4 and/or SGA101 is necessary for TNL-mediated effector-triggered immunity. Contributes to nonhost resistance against E.amylovora. Loss of EDS1-PAD4 interaction compromises basal but not TNL-triggered resistance. Necessary for systemic acquired resistance (SAR) signal generation and perception. Has no direct lipase activity. Putative lipase activity is dispensable for immune functions. This is Protein EDS1 from Arabidopsis thaliana (Mouse-ear cress).